The chain runs to 862 residues: Squamosa promoter-binding-like protein 1 (862 aa).

The tract at residues 55–98 (KRRRVSPEDDDGEECINAATTNGDDGQISGQRGRSSEDEMPRQG) is disordered. The span at 72 to 87 (AATTNGDDGQISGQRG) shows a compositional bias: polar residues. An SBP-type zinc finger spans residues 104-181 (GPCCQVDGCT…AQHNRRRRKV (78 aa)). 8 residues coordinate Zn(2+): Cys-107, Cys-112, Cys-129, His-132, Cys-148, Cys-151, His-155, and Cys-167. A Bipartite nuclear localization signal motif is present at residues 164–180 (KKSCRSRLAQHNRRRRK).

Ubiquitous.

Its subcellular location is the nucleus. Its function is as follows. Trans-acting factor that binds specifically to the consensus nucleotide sequence 5'-TNCGTACAA-3'. The sequence is that of Squamosa promoter-binding-like protein 1 (SPL1) from Oryza sativa subsp. japonica (Rice).